The chain runs to 100 residues: Integration host factor subunit alpha (100 aa).

The protein belongs to the bacterial histone-like protein family. As to quaternary structure, heterodimer of an alpha and a beta chain.

Functionally, this protein is one of the two subunits of integration host factor, a specific DNA-binding protein that functions in genetic recombination as well as in transcriptional and translational control. In Ectopseudomonas mendocina (strain ymp) (Pseudomonas mendocina), this protein is Integration host factor subunit alpha.